We begin with the raw amino-acid sequence, 164 residues long: MSTPARRRLMRDFKRMKEDSPPGVSASPLPDNVMIWNAMIIGPADTPYEDGTFRLLLEFDEEYPNKPPHVKFLSEMFHPNVYANGEICLDILQNRWTPTYDVASILTSIQSLFNDPNPASPANVEAATLFQDHKSQYVKRVKETVEKSWEDDMEDMADEDEDEE.

Positions 4–150 constitute a UBC core domain; it reads PARRRLMRDF…VKETVEKSWE (147 aa). Cys-88 (glycyl thioester intermediate) is an active-site residue.

It belongs to the ubiquitin-conjugating enzyme family.

The protein localises to the cytoplasm. It localises to the nucleus. The catalysed reaction is S-ubiquitinyl-[E1 ubiquitin-activating enzyme]-L-cysteine + [E2 ubiquitin-conjugating enzyme]-L-cysteine = [E1 ubiquitin-activating enzyme]-L-cysteine + S-ubiquitinyl-[E2 ubiquitin-conjugating enzyme]-L-cysteine.. It functions in the pathway protein modification; protein ubiquitination. Catalyzes the covalent attachment of ubiquitin to other proteins. Plays a role in transcription regulation by catalyzing the monoubiquitination of histone H2B to form H2BK123ub1. H2BK123ub1 gives a specific tag for epigenetic transcriptional activation and is also a prerequisite for H3K4me and H3K79me formation. Also involved in postreplication repair of UV-damaged DNA, in N-end rule-dependent protein degradation and in sporulation. The chain is Ubiquitin-conjugating enzyme E2 2 (UBC2) from Kluyveromyces lactis (strain ATCC 8585 / CBS 2359 / DSM 70799 / NBRC 1267 / NRRL Y-1140 / WM37) (Yeast).